We begin with the raw amino-acid sequence, 105 residues long: Protein AlbB (105 aa).

In terms of biological role, involved in the biosynthesis of albonoursin (cyclo[(alpha,beta-dehydro-Phe)-(alpha,beta-dehydro-Leu)]), an antibacterial peptide. AlbB is essential for cyclic dipeptide oxidase AlbA (CDO) activity. This Streptomyces noursei (Streptomyces albulus) protein is Protein AlbB (albB).